The sequence spans 256 residues: Pyridoxine 5'-phosphate synthase (256 aa).

3-amino-2-oxopropyl phosphate contacts are provided by N8 and R19. H44 serves as the catalytic Proton acceptor. Residues R46 and H51 each contribute to the 1-deoxy-D-xylulose 5-phosphate site. The active-site Proton acceptor is E74. T111 contributes to the 1-deoxy-D-xylulose 5-phosphate binding site. H202 acts as the Proton donor in catalysis. Residues D203 and 225-226 (GH) each bind 3-amino-2-oxopropyl phosphate.

The protein belongs to the PNP synthase family. As to quaternary structure, homooctamer; tetramer of dimers.

It is found in the cytoplasm. The catalysed reaction is 3-amino-2-oxopropyl phosphate + 1-deoxy-D-xylulose 5-phosphate = pyridoxine 5'-phosphate + phosphate + 2 H2O + H(+). It functions in the pathway cofactor biosynthesis; pyridoxine 5'-phosphate biosynthesis; pyridoxine 5'-phosphate from D-erythrose 4-phosphate: step 5/5. Functionally, catalyzes the complicated ring closure reaction between the two acyclic compounds 1-deoxy-D-xylulose-5-phosphate (DXP) and 3-amino-2-oxopropyl phosphate (1-amino-acetone-3-phosphate or AAP) to form pyridoxine 5'-phosphate (PNP) and inorganic phosphate. The polypeptide is Pyridoxine 5'-phosphate synthase (Xanthomonas campestris pv. campestris (strain 8004)).